Here is a 386-residue protein sequence, read N- to C-terminus: LL-diaminopimelate aminotransferase (386 aa).

Residues Tyr13 and Gly38 each contribute to the substrate site. Pyridoxal 5'-phosphate contacts are provided by residues Tyr67, 101–102 (SK), Tyr126, Asn176, Tyr207, and 235–237 (SLS). Substrate is bound by residues Lys102, Tyr126, and Asn176. Lys238 carries the post-translational modification N6-(pyridoxal phosphate)lysine. Arg246 is a binding site for pyridoxal 5'-phosphate. Arg364 contributes to the substrate binding site.

The protein belongs to the class-I pyridoxal-phosphate-dependent aminotransferase family. LL-diaminopimelate aminotransferase subfamily. Homodimer. Pyridoxal 5'-phosphate is required as a cofactor.

It catalyses the reaction (2S,6S)-2,6-diaminopimelate + 2-oxoglutarate = (S)-2,3,4,5-tetrahydrodipicolinate + L-glutamate + H2O + H(+). It functions in the pathway amino-acid biosynthesis; L-lysine biosynthesis via DAP pathway; LL-2,6-diaminopimelate from (S)-tetrahydrodipicolinate (aminotransferase route): step 1/1. Functionally, involved in the synthesis of meso-diaminopimelate (m-DAP or DL-DAP), required for both lysine and peptidoglycan biosynthesis. Catalyzes the direct conversion of tetrahydrodipicolinate to LL-diaminopimelate. This chain is LL-diaminopimelate aminotransferase, found in Natranaerobius thermophilus (strain ATCC BAA-1301 / DSM 18059 / JW/NM-WN-LF).